The primary structure comprises 368 residues: Chaperone protein DnaJ (368 aa).

The 65-residue stretch at 5-69 (DYYEVLGVAR…NQRARYDQFG (65 aa)) folds into the J domain. The CR-type zinc finger occupies 125 to 207 (GVEKVITIPV…CRGAGRVRKN (83 aa)). Residues C138, C141, C155, C158, C181, C184, C195, and C198 each coordinate Zn(2+). CXXCXGXG motif repeat units follow at residues 138–145 (CGTCHGSG), 155–162 (CKRCGGSG), 181–188 (CSTCHGRG), and 195–202 (CETCRGAG).

It belongs to the DnaJ family. In terms of assembly, homodimer. Zn(2+) serves as cofactor.

It localises to the cytoplasm. Functionally, participates actively in the response to hyperosmotic and heat shock by preventing the aggregation of stress-denatured proteins and by disaggregating proteins, also in an autonomous, DnaK-independent fashion. Unfolded proteins bind initially to DnaJ; upon interaction with the DnaJ-bound protein, DnaK hydrolyzes its bound ATP, resulting in the formation of a stable complex. GrpE releases ADP from DnaK; ATP binding to DnaK triggers the release of the substrate protein, thus completing the reaction cycle. Several rounds of ATP-dependent interactions between DnaJ, DnaK and GrpE are required for fully efficient folding. Also involved, together with DnaK and GrpE, in the DNA replication of plasmids through activation of initiation proteins. This Exiguobacterium sibiricum (strain DSM 17290 / CCUG 55495 / CIP 109462 / JCM 13490 / 255-15) protein is Chaperone protein DnaJ.